The primary structure comprises 110 residues: Large ribosomal subunit protein uL22 (110 aa).

Belongs to the universal ribosomal protein uL22 family. In terms of assembly, part of the 50S ribosomal subunit.

In terms of biological role, this protein binds specifically to 23S rRNA; its binding is stimulated by other ribosomal proteins, e.g. L4, L17, and L20. It is important during the early stages of 50S assembly. It makes multiple contacts with different domains of the 23S rRNA in the assembled 50S subunit and ribosome. The globular domain of the protein is located near the polypeptide exit tunnel on the outside of the subunit, while an extended beta-hairpin is found that lines the wall of the exit tunnel in the center of the 70S ribosome. The polypeptide is Large ribosomal subunit protein uL22 (Paraburkholderia phytofirmans (strain DSM 17436 / LMG 22146 / PsJN) (Burkholderia phytofirmans)).